A 205-amino-acid chain; its full sequence is Small ribosomal subunit protein uS4 (205 aa).

A disordered region spans residues 14 to 49; it reads RMGENIWGRPKSPVNRREYGPGQHGQRRKGKMSDFG. One can recognise an S4 RNA-binding domain in the interval 94 to 157; the sequence is SRLDAIVYRA…KQLVTVLEAV (64 aa).

It belongs to the universal ribosomal protein uS4 family. Part of the 30S ribosomal subunit. Contacts protein S5. The interaction surface between S4 and S5 is involved in control of translational fidelity.

In terms of biological role, one of the primary rRNA binding proteins, it binds directly to 16S rRNA where it nucleates assembly of the body of the 30S subunit. Its function is as follows. With S5 and S12 plays an important role in translational accuracy. The sequence is that of Small ribosomal subunit protein uS4 from Agrobacterium fabrum (strain C58 / ATCC 33970) (Agrobacterium tumefaciens (strain C58)).